The following is a 364-amino-acid chain: CLIP domain-containing serine protease B15 (364 aa).

Positions 1–19 are cleaved as a signal peptide; it reads MRWLVCLIVSWCSLVPLGA. Residues 30–89 form the Clip domain; sequence PCQTPSGTAGTCEPVKNCSYVRKILKSPDFSHYDTTYLDTLKCGDLMVPMRKKPIPLLCC. 3 disulfide bridges follow: Cys-31/Cys-88, Cys-41/Cys-72, and Cys-47/Cys-89. A glycan (N-linked (GlcNAc...) asparagine) is linked at Asn-46. The region spanning 107–359 is the Peptidase S1 domain; sequence IYFGEETERG…YLDWMETVMF (253 aa). A glycan (N-linked (GlcNAc...) asparagine) is linked at Asn-131. Cys-137 and Cys-153 form a disulfide bridge. His-152 (charge relay system) is an active-site residue. N-linked (GlcNAc...) asparagine glycosylation is found at Asn-171, Asn-177, and Asn-206. Asp-212 (charge relay system) is an active-site residue. Cys-279 and Cys-296 are oxidised to a cystine. Asn-287 and Asn-301 each carry an N-linked (GlcNAc...) asparagine glycan. An intrachain disulfide couples Cys-306 to Cys-335. Catalysis depends on Ser-310, which acts as the Charge relay system.

Belongs to the peptidase S1 family. CLIP subfamily. In terms of processing, N-glycosylated. Proteolytically cleaved. Expressed by a subpopulation of hemocytes.

It is found in the secreted. Serine protease. Plays a role in innate immunity against infections by parasite P.berghei and by Gram-negative bacteria such as E.coli. In response to P.berghei infection, contributes to the clearing of parasite ookinetes independent of melanization, an innate immune response which consists in the deposition of melanin pigments on invading pathogens and parasites. The polypeptide is CLIP domain-containing serine protease B15 (Anopheles gambiae (African malaria mosquito)).